The chain runs to 143 residues: MRVLVQRVSSAAVRVDGRVVGAIRPDGQGLVAFVGVTHGDDLDKARRLAEKLWNLRVLADEKSASDMHAPILVISQFTLYADTAKGRRPSWNAAAPGAVAQPLIAAFAAALRQLGAHVEAGVFGAHMQVELVNDGPVTVMLEG.

Positions 135 to 136 (GP) match the Gly-cisPro motif, important for rejection of L-amino acids motif.

It belongs to the DTD family. Homodimer.

Its subcellular location is the cytoplasm. It carries out the reaction glycyl-tRNA(Ala) + H2O = tRNA(Ala) + glycine + H(+). The enzyme catalyses a D-aminoacyl-tRNA + H2O = a tRNA + a D-alpha-amino acid + H(+). In terms of biological role, an aminoacyl-tRNA editing enzyme that deacylates mischarged D-aminoacyl-tRNAs. Also deacylates mischarged glycyl-tRNA(Ala), protecting cells against glycine mischarging by AlaRS. Acts via tRNA-based rather than protein-based catalysis; rejects L-amino acids rather than detecting D-amino acids in the active site. By recycling D-aminoacyl-tRNA to D-amino acids and free tRNA molecules, this enzyme counteracts the toxicity associated with the formation of D-aminoacyl-tRNA entities in vivo and helps enforce protein L-homochirality. The protein is D-aminoacyl-tRNA deacylase of Mycobacterium bovis (strain ATCC BAA-935 / AF2122/97).